Here is a 342-residue protein sequence, read N- to C-terminus: Cytochrome c oxidase subunit 2 (342 aa).

The signal sequence occupies residues 1-22 (MKLWKTASRFLPLSFLTLFLTG). Cys23 carries N-palmitoyl cysteine lipidation. Cys23 carries the S-diacylglycerol cysteine lipid modification. Topologically, residues 23–50 (CLGEENLTALDPKGPQAQWIYDNMILSI) are extracellular. A cytochrome c oxidase subunit II region spans residues 23–249 (CLGEENLTAL…MSAEVEEPTE (227 aa)). A helical membrane pass occupies residues 51-69 (IVMALVSIVVFAIFFIILA). The Cytoplasmic segment spans residues 70 to 89 (KYRRKPGDDEIPKQVHGNTA). The helical transmembrane segment at 90-108 (LEITWTVIPIILLVILAVP) threads the bilayer. Over 109–342 (TITGTFMFAD…AYLRSLKVME (234 aa)) the chain is Extracellular. His175, Cys210, Cys214, and His218 together coordinate Cu cation. A Cytochrome c domain is found at 250–342 (TLANQGRQVF…AYLRSLKVME (93 aa)). The heme c site is built by Cys264, Cys267, His268, and Met317.

This sequence belongs to the cytochrome c oxidase subunit 2 family. Cu cation serves as cofactor. The cofactor is heme c.

It localises to the cell membrane. The enzyme catalyses 4 Fe(II)-[cytochrome c] + O2 + 8 H(+)(in) = 4 Fe(III)-[cytochrome c] + 2 H2O + 4 H(+)(out). In terms of biological role, subunits I and II form the functional core of the enzyme complex. Electrons originating in cytochrome c are transferred via heme a and Cu(A) to the binuclear center formed by heme a3 and Cu(B). This chain is Cytochrome c oxidase subunit 2 (ctaC), found in Alkalihalophilus pseudofirmus (strain ATCC BAA-2126 / JCM 17055 / OF4) (Bacillus pseudofirmus).